Reading from the N-terminus, the 480-residue chain is Glycogen synthase (480 aa).

This sequence belongs to the glycosyltransferase 1 family. Bacterial/plant glycogen synthase subfamily.

It carries out the reaction [(1-&gt;4)-alpha-D-glucosyl](n) + ADP-alpha-D-glucose = [(1-&gt;4)-alpha-D-glucosyl](n+1) + ADP + H(+). Its pathway is glycan biosynthesis; glycogen biosynthesis. Its function is as follows. Synthesizes alpha-1,4-glucan chains using ADP-glucose. This is Glycogen synthase from Rhizobium etli (strain ATCC 51251 / DSM 11541 / JCM 21823 / NBRC 15573 / CFN 42).